The chain runs to 135 residues: Ribosome-binding factor A (135 aa).

It belongs to the RbfA family. In terms of assembly, monomer. Binds 30S ribosomal subunits, but not 50S ribosomal subunits or 70S ribosomes.

The protein resides in the cytoplasm. In terms of biological role, one of several proteins that assist in the late maturation steps of the functional core of the 30S ribosomal subunit. Associates with free 30S ribosomal subunits (but not with 30S subunits that are part of 70S ribosomes or polysomes). Required for efficient processing of 16S rRNA. May interact with the 5'-terminal helix region of 16S rRNA. In Aliivibrio fischeri (strain ATCC 700601 / ES114) (Vibrio fischeri), this protein is Ribosome-binding factor A.